Here is a 155-residue protein sequence, read N- to C-terminus: MSRQSETKKRTAKSDPIYRNRSVSMFINHILKDGEKSLAHKILYRAMKQIKRKTKKNPLSVLRQAVYRVTPNVAVKSRRVGGSNYQVPVEVKPARGKALAIRWIVGASRNRSGRSMASKSSYELIDAARNTGSAIRKKEETHKMAEANKAFAHLR.

The protein belongs to the universal ribosomal protein uS7 family. As to quaternary structure, part of the 30S ribosomal subunit.

It localises to the plastid. Its subcellular location is the chloroplast. One of the primary rRNA binding proteins, it binds directly to 16S rRNA where it nucleates assembly of the head domain of the 30S subunit. The chain is Small ribosomal subunit protein uS7cz/uS7cy (rps7-A) from Psilotum nudum (Whisk fern).